Reading from the N-terminus, the 321-residue chain is Ornithine carbamoyltransferase (321 aa).

Carbamoyl phosphate-binding positions include 53-56 (STRT), Gln80, Arg104, and 131-134 (HPCQ). L-ornithine is bound by residues Asn166, Asp230, and 234–235 (SM). Residues 270–271 (CL) and Arg298 contribute to the carbamoyl phosphate site.

This sequence belongs to the aspartate/ornithine carbamoyltransferase superfamily. OTCase family.

The protein localises to the cytoplasm. It carries out the reaction carbamoyl phosphate + L-ornithine = L-citrulline + phosphate + H(+). It participates in amino-acid biosynthesis; L-arginine biosynthesis; L-arginine from L-ornithine and carbamoyl phosphate: step 1/3. Functionally, reversibly catalyzes the transfer of the carbamoyl group from carbamoyl phosphate (CP) to the N(epsilon) atom of ornithine (ORN) to produce L-citrulline. This chain is Ornithine carbamoyltransferase, found in Bifidobacterium longum (strain NCC 2705).